The sequence spans 209 residues: Ribosomal RNA large subunit methyltransferase E (209 aa).

S-adenosyl-L-methionine contacts are provided by glycine 63, tryptophan 65, aspartate 83, aspartate 99, and aspartate 124. Lysine 164 serves as the catalytic Proton acceptor.

It belongs to the class I-like SAM-binding methyltransferase superfamily. RNA methyltransferase RlmE family.

It is found in the cytoplasm. It carries out the reaction uridine(2552) in 23S rRNA + S-adenosyl-L-methionine = 2'-O-methyluridine(2552) in 23S rRNA + S-adenosyl-L-homocysteine + H(+). Specifically methylates the uridine in position 2552 of 23S rRNA at the 2'-O position of the ribose in the fully assembled 50S ribosomal subunit. The sequence is that of Ribosomal RNA large subunit methyltransferase E from Vibrio cholerae serotype O1 (strain ATCC 39541 / Classical Ogawa 395 / O395).